A 308-amino-acid polypeptide reads, in one-letter code: Porphobilinogen deaminase (308 aa).

Residue C241 is modified to S-(dipyrrolylmethanemethyl)cysteine.

The protein belongs to the HMBS family. Monomer. Dipyrromethane is required as a cofactor.

It carries out the reaction 4 porphobilinogen + H2O = hydroxymethylbilane + 4 NH4(+). Its pathway is porphyrin-containing compound metabolism; protoporphyrin-IX biosynthesis; coproporphyrinogen-III from 5-aminolevulinate: step 2/4. Its function is as follows. Tetrapolymerization of the monopyrrole PBG into the hydroxymethylbilane pre-uroporphyrinogen in several discrete steps. This Staphylococcus saprophyticus subsp. saprophyticus (strain ATCC 15305 / DSM 20229 / NCIMB 8711 / NCTC 7292 / S-41) protein is Porphobilinogen deaminase.